The sequence spans 552 residues: Putative transport protein APL_0966 (552 aa).

Helical transmembrane passes span 4–24, 29–49, 65–85, 95–115, and 161–181; these read IAII…IGHI, VGLG…CTHL, FGLI…FFAS, GFAV…HKLF, and IAYP…RIIF. 2 consecutive RCK C-terminal domains span residues 190–275 and 277–360; these read QEFD…ILGE and ADVS…IIGD. 6 consecutive transmembrane segments (helical) span residues 370–390, 402–424, 438–458, 463–483, 492–512, and 529–549; these read MLPI…PLYI, AGGP…LYWF, IVLF…DTLL, LAWM…TGFV, YLSL…LAFA, and VYPL…ILLW.

The protein belongs to the AAE transporter (TC 2.A.81) family. YidE subfamily.

It is found in the cell membrane. This is Putative transport protein APL_0966 from Actinobacillus pleuropneumoniae serotype 5b (strain L20).